Reading from the N-terminus, the 277-residue chain is Phosphatidylserine decarboxylase proenzyme (277 aa).

Catalysis depends on charge relay system; for autoendoproteolytic cleavage activity residues Asp-88, His-144, and Ser-242. Ser-242 functions as the Schiff-base intermediate with substrate; via pyruvic acid; for decarboxylase activity in the catalytic mechanism. Residue Ser-242 is modified to Pyruvic acid (Ser); by autocatalysis.

It belongs to the phosphatidylserine decarboxylase family. PSD-B subfamily. Prokaryotic type I sub-subfamily. As to quaternary structure, heterodimer of a large membrane-associated beta subunit and a small pyruvoyl-containing alpha subunit. It depends on pyruvate as a cofactor. Post-translationally, is synthesized initially as an inactive proenzyme. Formation of the active enzyme involves a self-maturation process in which the active site pyruvoyl group is generated from an internal serine residue via an autocatalytic post-translational modification. Two non-identical subunits are generated from the proenzyme in this reaction, and the pyruvate is formed at the N-terminus of the alpha chain, which is derived from the carboxyl end of the proenzyme. The autoendoproteolytic cleavage occurs by a canonical serine protease mechanism, in which the side chain hydroxyl group of the serine supplies its oxygen atom to form the C-terminus of the beta chain, while the remainder of the serine residue undergoes an oxidative deamination to produce ammonia and the pyruvoyl prosthetic group on the alpha chain. During this reaction, the Ser that is part of the protease active site of the proenzyme becomes the pyruvoyl prosthetic group, which constitutes an essential element of the active site of the mature decarboxylase.

It is found in the cell membrane. It carries out the reaction a 1,2-diacyl-sn-glycero-3-phospho-L-serine + H(+) = a 1,2-diacyl-sn-glycero-3-phosphoethanolamine + CO2. It functions in the pathway phospholipid metabolism; phosphatidylethanolamine biosynthesis; phosphatidylethanolamine from CDP-diacylglycerol: step 2/2. Functionally, catalyzes the formation of phosphatidylethanolamine (PtdEtn) from phosphatidylserine (PtdSer). The chain is Phosphatidylserine decarboxylase proenzyme from Psychrobacter arcticus (strain DSM 17307 / VKM B-2377 / 273-4).